The following is a 256-amino-acid chain: Thyroid transcription factor 1-associated protein 26 homolog (256 aa).

2 disordered regions span residues 1–35 (MAPF…AKRK) and 72–190 (RKER…KQEY). A compositionally biased stretch (basic and acidic residues) spans 89-104 (YPEHLKHLYLAERERL). Over residues 136–185 (LGSSSSEKNITNTSTDQTIAPASSNEPAQPESSHKTTFFQRKQNISSYQK) the composition is skewed to polar residues.

It belongs to the TAP26 family.

The sequence is that of Thyroid transcription factor 1-associated protein 26 homolog (ccdc59) from Danio rerio (Zebrafish).